The primary structure comprises 100 residues: MDINRAIRVAVDTGNVVLGTKQAIKNIKHGEGQLVIVADNCAKDVREDIFYYTQLSETPVYTHQATSIELGAICGKPFPVSALLVLEPGNSAILNVNNEE.

It belongs to the eukaryotic ribosomal protein eL30 family.

The polypeptide is Large ribosomal subunit protein eL30 (Methanococcus maripaludis (strain DSM 14266 / JCM 13030 / NBRC 101832 / S2 / LL)).